The chain runs to 113 residues: uncharacterized protein (113 aa).

This is an uncharacterized protein from Acanthamoeba polyphaga mimivirus (APMV).